The chain runs to 72 residues: Large ribosomal subunit protein bL31 (72 aa).

Zn(2+) is bound by residues cysteine 16, cysteine 18, cysteine 38, and cysteine 41.

It belongs to the bacterial ribosomal protein bL31 family. Type A subfamily. As to quaternary structure, part of the 50S ribosomal subunit. Zn(2+) is required as a cofactor.

Functionally, binds the 23S rRNA. The chain is Large ribosomal subunit protein bL31 from Vibrio campbellii (strain ATCC BAA-1116).